A 42-amino-acid polypeptide reads, in one-letter code: Serine protease inhibitor 8 (42 aa).

This sequence belongs to the protease inhibitor I3 (leguminous Kunitz-type inhibitor) family. In terms of tissue distribution, cortex of potato tuber.

Its function is as follows. Potent inhibitor of animal pancreatic trypsin (serine protease). This Solanum tuberosum (Potato) protein is Serine protease inhibitor 8.